A 1498-amino-acid polypeptide reads, in one-letter code: ATP-binding cassette sub-family C member 6 (1498 aa).

Residues 1-37 (MNRGRSMATPGEQCAGLRVWNQTEQEPAAYHLLSLCF) are Extracellular-facing. An N-linked (GlcNAc...) asparagine glycan is attached at asparagine 21. The chain crosses the membrane as a helical span at residues 38-58 (VRAASSWVPPMYLWVLGPIYL). Topologically, residues 59–78 (LYIHRHGRCYLRMSHLFKTK) are cytoplasmic. A helical membrane pass occupies residues 79–99 (MVLGLALILLYTFNVAVPLWR). Over 100–104 (IHQGV) the chain is Extracellular. A helical transmembrane segment spans residues 105 to 125 (PQAPELLIHPTVWLTTMSFAT). The Cytoplasmic segment spans residues 126–137 (FLIHMERRKGVR). The chain crosses the membrane as a helical span at residues 138–155 (SSGVLFGYWLLCCILPGI). Topologically, residues 156–173 (NTVQQASAGNFRQEPLHH) are extracellular. The chain crosses the membrane as a helical span at residues 174–194 (LATYLCLSLVVAELVLSCLVD). Residues 195-300 (QPPFFSEDSQ…RSQRGPLLRA (106 aa)) lie on the Cytoplasmic side of the membrane. Residues 301–321 (IWRVFRSTFLLGTLSLVISDA) form a helical membrane-spanning segment. In terms of domain architecture, ABC transmembrane type-1 1 spans 309-592 (FLLGTLSLVI…LPFSVHCIVQ (284 aa)). The Extracellular portion of the chain corresponds to 322–347 (FRFAVPKLLSLFLEFMGDRNSSAWTG). N-linked (GlcNAc...) asparagine glycosylation is present at asparagine 341. Residues 348-368 (WLLAVLMFAAACLQTLFEQQH) traverse the membrane as a helical segment. At 369-424 (MYRAKVLQMRLRTAITGLVYRKVLVLSSGSRKSSAAGDVVNLVSVDIQRLAESIIY) the chain is on the cytoplasmic side. The chain crosses the membrane as a helical span at residues 425–445 (LNGLWLLFLWIFVCFVYLWQL). At 446–448 (LGP) the chain is on the extracellular side. The chain crosses the membrane as a helical span at residues 449–469 (SALTAVAVFLSLLPLNFFITK). Topologically, residues 470-531 (KRGFHQEEQM…ALKTSTLLFS (62 aa)) are cytoplasmic. The chain crosses the membrane as a helical span at residues 532-552 (VSLVSFQVSTFLVALVVFAVH). Residues 553-574 (TLVAEDNAMDAEKAFVTLTVLS) lie on the Extracellular side of the membrane. Residues 575–595 (ILNKAQAFLPFSVHCIVQARV) traverse the membrane as a helical segment. At 596 to 934 (SFDRLAAFLC…VKTTIYLSYL (339 aa)) the chain is on the cytoplasmic side. The region spanning 627-851 (ISVHNGTFAW…NGALVGLLDG (225 aa)) is the ABC transporter 1 domain. Residue 661 to 668 (GPVGAGKS) participates in ATP binding. The interval 855-910 (PAGTHDAATSDDLGGFPGGGRPTCRPDRPRPTEAAPVKGRSTSEVQMEASLDDPEA) is disordered. The helical transmembrane segment at 935-955 (RAVGTPLCTYTLFLFLCQQVA) threads the bilayer. One can recognise an ABC transmembrane type-1 2 domain in the interval 942-1223 (CTYTLFLFLC…VVRSWTDLEN (282 aa)). Residues 956-992 (SFSQGYWLSLWADDPVVDGRQMHAALRGWVFGLLGCL) are Extracellular-facing. A helical membrane pass occupies residues 993–1013 (QAIGLFASMAAVFLGGARASG). The Cytoplasmic segment spans residues 1014 to 1056 (LLFRSLLWDVARSPIGFFERTPVGNLLNRFSKETDTVDVDIPD). A helical transmembrane segment spans residues 1057-1077 (KLRSLLTYAFGLLEVGLAVTM). Alanine 1078 is a topological domain (extracellular). Residues 1079–1099 (TPLAIVAILPLMVLYAGFQSL) form a helical membrane-spanning segment. At 1100–1170 (YVATSCQLRR…VADRWLATNL (71 aa)) the chain is on the cytoplasmic side. A helical membrane pass occupies residues 1171–1191 (ELLGNGLVFVAATCAVLSKAH). Residues 1192 to 1193 (LS) lie on the Extracellular side of the membrane. A helical membrane pass occupies residues 1194–1214 (AGLVGFSVSAALQVTQTLQWV). Over 1215-1498 (VRSWTDLENS…YRLAHESGLA (284 aa)) the chain is Cytoplasmic. One can recognise an ABC transporter 2 domain in the interval 1260–1494 (IEFRDFGLRH…KGLFYRLAHE (235 aa)). A Phosphoserine modification is found at serine 1281. Residue 1294–1301 (GRTGAGKS) coordinates ATP.

Belongs to the ABC transporter superfamily. ABCC family. Conjugate transporter (TC 3.A.1.208) subfamily. Glycosylated.

The protein resides in the basolateral cell membrane. The protein localises to the basal cell membrane. The enzyme catalyses an S-substituted glutathione(in) + ATP + H2O = an S-substituted glutathione(out) + ADP + phosphate + H(+). It catalyses the reaction leukotriene C4(in) + ATP + H2O = leukotriene C4(out) + ADP + phosphate + H(+). Its function is as follows. ATP-dependent transporter of the ATP-binding cassette (ABC) family that actively extrudes physiological compounds, and xenobiotics from cells. Mediates ATP-dependent transport of glutathione conjugates such as leukotriene-c4 (LTC4) and N-ethylmaleimide S-glutathione (NEM-GS) (in vitro), and an anionic cyclopentapeptide endothelin antagonist, BQ-123. May contribute to regulate the transport of organic compounds in testes across the blood-testis-barrier. In terms of biological role, mediates the release of nucleoside triphosphates, predominantly ATP, into the circulation, where it is rapidly converted into AMP and the mineralization inhibitor inorganic pyrophosphate (PPi) by the ecto-enzyme ectonucleotide pyrophosphatase phosphodiesterase 1 (ENPP1), therefore playing a role in PPi homeostasis. This is ATP-binding cassette sub-family C member 6 (Abcc6) from Mus musculus (Mouse).